We begin with the raw amino-acid sequence, 352 residues long: Holliday junction branch migration complex subunit RuvB (352 aa).

The segment at 13-201 (LPLRKKELRL…FGISQKIEFY (189 aa)) is large ATPase domain (RuvB-L). ATP contacts are provided by residues Arg-41, Gly-82, Lys-85, Thr-86, Thr-87, 148–150 (EDF), Arg-191, Tyr-201, and Arg-238. Thr-86 contacts Mg(2+). Residues 202–273 (NYDELKQILL…LIKKALNSYQ (72 aa)) form a small ATPAse domain (RuvB-S) region. Residues 276–352 (DKGLDSLDRH…KYIDSKNDDF (77 aa)) form a head domain (RuvB-H) region. DNA-binding residues include Arg-330 and Arg-335.

The protein belongs to the RuvB family. In terms of assembly, homohexamer. Forms an RuvA(8)-RuvB(12)-Holliday junction (HJ) complex. HJ DNA is sandwiched between 2 RuvA tetramers; dsDNA enters through RuvA and exits via RuvB. An RuvB hexamer assembles on each DNA strand where it exits the tetramer. Each RuvB hexamer is contacted by two RuvA subunits (via domain III) on 2 adjacent RuvB subunits; this complex drives branch migration. In the full resolvosome a probable DNA-RuvA(4)-RuvB(12)-RuvC(2) complex forms which resolves the HJ.

It is found in the cytoplasm. The enzyme catalyses ATP + H2O = ADP + phosphate + H(+). The RuvA-RuvB-RuvC complex processes Holliday junction (HJ) DNA during genetic recombination and DNA repair, while the RuvA-RuvB complex plays an important role in the rescue of blocked DNA replication forks via replication fork reversal (RFR). RuvA specifically binds to HJ cruciform DNA, conferring on it an open structure. The RuvB hexamer acts as an ATP-dependent pump, pulling dsDNA into and through the RuvAB complex. RuvB forms 2 homohexamers on either side of HJ DNA bound by 1 or 2 RuvA tetramers; 4 subunits per hexamer contact DNA at a time. Coordinated motions by a converter formed by DNA-disengaged RuvB subunits stimulates ATP hydrolysis and nucleotide exchange. Immobilization of the converter enables RuvB to convert the ATP-contained energy into a lever motion, pulling 2 nucleotides of DNA out of the RuvA tetramer per ATP hydrolyzed, thus driving DNA branch migration. The RuvB motors rotate together with the DNA substrate, which together with the progressing nucleotide cycle form the mechanistic basis for DNA recombination by continuous HJ branch migration. Branch migration allows RuvC to scan DNA until it finds its consensus sequence, where it cleaves and resolves cruciform DNA. This Prochlorococcus marinus (strain MIT 9301) protein is Holliday junction branch migration complex subunit RuvB.